The following is a 43-amino-acid chain: Protein PsbN (43 aa).

A helical transmembrane segment spans residues 7 to 27 (LIVAIAAVTICITAFAIYTAF).

It belongs to the PsbN family.

It localises to the cellular thylakoid membrane. In terms of biological role, may play a role in photosystem I and II biogenesis. The polypeptide is Protein PsbN (Synechococcus sp. (strain JA-2-3B'a(2-13)) (Cyanobacteria bacterium Yellowstone B-Prime)).